We begin with the raw amino-acid sequence, 351 residues long: Phospho-N-acetylmuramoyl-pentapeptide-transferase (351 aa).

Helical transmembrane passes span 17–37, 61–83, 88–105, 130–150, 158–178, 190–210, 230–250, 254–274, 279–299, and 328–348; these read TAYATIFAFLLALIFGPFIIS, MGIPTMGGVLIFFCVLVSLFFWI, IYFLIVLFVMVSFACLGF, ILFSFISVVMLYYFGGEHVSI, SLKLDLGILYIPFGMFVLISA, GLAIGLSIVVIGALIIIAYLT, LVIFLGALLGGSFGFLWFNAY, IMMGDTGSLSIGAVLGMVALI, ILFAILAGVFVVETLSVIIQV, and QVVIRFWIIGLIFAILALSTI.

It belongs to the glycosyltransferase 4 family. MraY subfamily. Mg(2+) serves as cofactor.

The protein localises to the cell inner membrane. The catalysed reaction is UDP-N-acetyl-alpha-D-muramoyl-L-alanyl-gamma-D-glutamyl-meso-2,6-diaminopimeloyl-D-alanyl-D-alanine + di-trans,octa-cis-undecaprenyl phosphate = di-trans,octa-cis-undecaprenyl diphospho-N-acetyl-alpha-D-muramoyl-L-alanyl-D-glutamyl-meso-2,6-diaminopimeloyl-D-alanyl-D-alanine + UMP. It functions in the pathway cell wall biogenesis; peptidoglycan biosynthesis. Catalyzes the initial step of the lipid cycle reactions in the biosynthesis of the cell wall peptidoglycan: transfers peptidoglycan precursor phospho-MurNAc-pentapeptide from UDP-MurNAc-pentapeptide onto the lipid carrier undecaprenyl phosphate, yielding undecaprenyl-pyrophosphoryl-MurNAc-pentapeptide, known as lipid I. This is Phospho-N-acetylmuramoyl-pentapeptide-transferase from Borrelia recurrentis (strain A1).